Consider the following 159-residue polypeptide: Large ribosomal subunit protein mL50 (159 aa).

Belongs to the mitochondrion-specific ribosomal protein mL50 family. In terms of assembly, component of the mitochondrial ribosome large subunit (39S) which comprises a 16S rRNA and about 50 distinct proteins.

It localises to the mitochondrion. This chain is Large ribosomal subunit protein mL50 (MRPL50), found in Bos taurus (Bovine).